The primary structure comprises 357 residues: Mitochondrial carrier protein LEU5 (357 aa).

Helical transmembrane passes span 31–47, 103–119, 136–153, 208–228, 269–285, and 325–347; these read DYIVRSGLAGGISGSCA, LRIFPYAAVKFVAYEQI, LVSGSLAGLCSVFITYPL, VPTVLGMIPYAGVSFFAHDLL, ISGGLAGMASQTAAYPF, and GFFVGLSIGYIKVTPMVACSFFV. Solcar repeat units lie at residues 31-122, 130-231, and 262-354; these read DYIV…IRNT, ESHW…LHDV, and LRTW…MKWN.

It belongs to the mitochondrial carrier (TC 2.A.29) family.

The protein localises to the mitochondrion inner membrane. In terms of biological role, required for the accumulation of coenzyme A in the mitochondrial matrix. The polypeptide is Mitochondrial carrier protein LEU5 (LEU5) (Saccharomyces cerevisiae (strain ATCC 204508 / S288c) (Baker's yeast)).